The chain runs to 152 residues: D-aminoacyl-tRNA deacylase (152 aa).

A Gly-cisPro motif, important for rejection of L-amino acids motif is present at residues G137–P138.

The protein belongs to the DTD family. Homodimer.

It localises to the cytoplasm. It catalyses the reaction glycyl-tRNA(Ala) + H2O = tRNA(Ala) + glycine + H(+). The enzyme catalyses a D-aminoacyl-tRNA + H2O = a tRNA + a D-alpha-amino acid + H(+). In terms of biological role, an aminoacyl-tRNA editing enzyme that deacylates mischarged D-aminoacyl-tRNAs. Also deacylates mischarged glycyl-tRNA(Ala), protecting cells against glycine mischarging by AlaRS. Acts via tRNA-based rather than protein-based catalysis; rejects L-amino acids rather than detecting D-amino acids in the active site. By recycling D-aminoacyl-tRNA to D-amino acids and free tRNA molecules, this enzyme counteracts the toxicity associated with the formation of D-aminoacyl-tRNA entities in vivo and helps enforce protein L-homochirality. In Aromatoleum aromaticum (strain DSM 19018 / LMG 30748 / EbN1) (Azoarcus sp. (strain EbN1)), this protein is D-aminoacyl-tRNA deacylase.